The primary structure comprises 311 residues: Transmembrane protein 177 (311 aa).

Residues 1–17 lie on the Mitochondrial matrix side of the membrane; the sequence is MAGPLWRTAAFVQRHRT. Residues 18–38 traverse the membrane as a helical segment; sequence GLLVGSCAGLFGVPISYHLFP. At 39-166 the chain is on the mitochondrial intermembrane side; it reads DPVVQWLYQY…EVVYLESSTT (128 aa). Residues 167 to 187 traverse the membrane as a helical segment; it reads AVHALLAPACLAGTWALGVGA. Topologically, residues 188-197 are mitochondrial matrix; it reads KYTLGLHAGP. A helical membrane pass occupies residues 198–218; the sequence is MNLRAAFSLVAAVAGFVAYAF. Topologically, residues 219-311 are mitochondrial intermembrane; that stretch reads SQDSLTHAVE…WRGMLNPGRS (93 aa).

The protein belongs to the TMEM177 family. As to quaternary structure, found in a complex with COX20, COA6, MT-CO2/COX2, COX18, SCO1 and SCO2. Interacts with COX20. Interacts with COX1, MT-CO2/COX2, SCO1 and SCO2 in a COX20-dependent manner.

Its subcellular location is the mitochondrion inner membrane. Its function is as follows. Plays a role in the early steps of cytochrome c oxidase subunit II (MT-CO2/COX2) maturation and is required for the stabilization of COX20 and the newly synthesized MT-CO2/COX2 protein. This is Transmembrane protein 177 (TMEM177) from Homo sapiens (Human).